The sequence spans 808 residues: Phenylalanine--tRNA ligase beta subunit (808 aa).

Residues 40-157 (NKGATNVVVG…QSVEPGQDAL (118 aa)) form the tRNA-binding domain. A B5 domain is found at 411 to 486 (RSERVIALDL…RLYGYDELPS (76 aa)). Mg(2+)-binding residues include D464, D470, E473, and E474. The FDX-ACB domain occupies 714–807 (PRYPAITRDM…VQKQTGAVLR (94 aa)).

Belongs to the phenylalanyl-tRNA synthetase beta subunit family. Type 1 subfamily. Tetramer of two alpha and two beta subunits. Mg(2+) serves as cofactor.

It is found in the cytoplasm. The catalysed reaction is tRNA(Phe) + L-phenylalanine + ATP = L-phenylalanyl-tRNA(Phe) + AMP + diphosphate + H(+). In Shouchella clausii (strain KSM-K16) (Alkalihalobacillus clausii), this protein is Phenylalanine--tRNA ligase beta subunit.